The following is a 202-amino-acid chain: Ribonuclease HII (202 aa).

An RNase H type-2 domain is found at Leu-14 to Ala-202. Residues Asp-20, Glu-21, and Asp-111 each contribute to the a divalent metal cation site.

It belongs to the RNase HII family. It depends on Mn(2+) as a cofactor. The cofactor is Mg(2+).

The protein resides in the cytoplasm. It catalyses the reaction Endonucleolytic cleavage to 5'-phosphomonoester.. In terms of biological role, endonuclease that specifically degrades the RNA of RNA-DNA hybrids. The sequence is that of Ribonuclease HII from Rhizorhabdus wittichii (strain DSM 6014 / CCUG 31198 / JCM 15750 / NBRC 105917 / EY 4224 / RW1) (Sphingomonas wittichii).